The sequence spans 314 residues: TPR repeat-containing protein MJ1345 (314 aa).

TPR repeat units lie at residues 12 to 45 (ESIL…RESP), 46 to 78 (DVYV…KPKY), 80 to 112 (LANF…EKSD), 114 to 146 (PVKY…YPKS), 147 to 180 (AIAW…NPKD), 182 to 214 (QSLL…NNKD), 215 to 248 (IRAL…NPDD), 249 to 282 (PLLY…NPNI), and 284 to 313 (DAWN…LDIY).

This Methanocaldococcus jannaschii (strain ATCC 43067 / DSM 2661 / JAL-1 / JCM 10045 / NBRC 100440) (Methanococcus jannaschii) protein is TPR repeat-containing protein MJ1345.